The sequence spans 210 residues: Regulator of G-protein signaling 17 (210 aa).

Residues 1 to 21 (MRKRQQSQNEGTSAVSQAPGN) are disordered. The RGS domain maps to 84–200 (NFDKMMKTPA…LNSQIYKSLV (117 aa)).

In terms of assembly, interacts with GNAI1 and GNAQ. Interacts with GNAZ and GNAI2. Forms a complex with mu-opioid receptors and G(alpha)z/i2 subunits, including GNAZ and GNAI2; the formation of this complex results in mu-opioid receptor desensitization. In terms of processing, N- and O-glycosylated in synapsomal membranes. Post-translationally, serine phosphorylated in synapsomal membranes. Sumoylated with SUMO1 and SUM02 in synaptosomes. The sumoylated forms act as a scaffold for sequestering mu-opioid receptor-activated G(alpha) subunits.

The protein localises to the membrane. The protein resides in the synapse. It localises to the synaptosome. Its subcellular location is the nucleus. It is found in the cytoplasm. In terms of biological role, regulates G protein-coupled receptor signaling cascades, including signaling via muscarinic acetylcholine receptor CHRM2 and dopamine receptor DRD2. Inhibits signal transduction by increasing the GTPase activity of G protein alpha subunits, thereby driving them into their inactive GDP-bound form. Binds selectively to GNAZ and GNAI2 subunits, accelerates their GTPase activity and regulates their signaling activities. Negatively regulates mu-opioid receptor-mediated activation of the G-proteins. The sequence is that of Regulator of G-protein signaling 17 (RGS17) from Gallus gallus (Chicken).